A 554-amino-acid polypeptide reads, in one-letter code: uncharacterized protein (554 aa).

Residues 1-33 (MKKILIIILFIIIFIVLIYSGLWFVIMFSLSHS) form the signal peptide.

This is an uncharacterized protein from Rickettsia prowazekii (strain Madrid E).